An 80-amino-acid polypeptide reads, in one-letter code: Putative membrane protein insertion efficiency factor (80 aa).

The disordered stretch occupies residues 61 to 80 (KTGKDPVPDHFSLKRNQEGE). A compositionally biased stretch (basic and acidic residues) spans 62 to 80 (TGKDPVPDHFSLKRNQEGE).

It belongs to the UPF0161 family.

It localises to the cell membrane. Could be involved in insertion of integral membrane proteins into the membrane. This Streptococcus pneumoniae serotype 19F (strain G54) protein is Putative membrane protein insertion efficiency factor.